The chain runs to 280 residues: Eukaryotic translation initiation factor 3 subunit F-1 (280 aa).

Positions 8–138 constitute an MPN domain; it reads VRVHPVVLFQ…LRAYVCIQLG (131 aa).

The protein belongs to the eIF-3 subunit F family. As to quaternary structure, component of the eukaryotic translation initiation factor 3 (eIF-3) complex. The eIF-3 complex interacts with pix.

It localises to the cytoplasm. In terms of biological role, component of the eukaryotic translation initiation factor 3 (eIF-3) complex, which is involved in protein synthesis of a specialized repertoire of mRNAs and, together with other initiation factors, stimulates binding of mRNA and methionyl-tRNAi to the 40S ribosome. The eIF-3 complex specifically targets and initiates translation of a subset of mRNAs involved in cell proliferation. This Drosophila erecta (Fruit fly) protein is Eukaryotic translation initiation factor 3 subunit F-1.